Reading from the N-terminus, the 78-residue chain is Small ribosomal subunit protein bS18 (78 aa).

Belongs to the bacterial ribosomal protein bS18 family. As to quaternary structure, part of the 30S ribosomal subunit. Forms a tight heterodimer with protein bS6.

In terms of biological role, binds as a heterodimer with protein bS6 to the central domain of the 16S rRNA, where it helps stabilize the platform of the 30S subunit. The chain is Small ribosomal subunit protein bS18 from Lactobacillus delbrueckii subsp. bulgaricus (strain ATCC BAA-365 / Lb-18).